The following is an 89-amino-acid chain: Antimicrobial peptide Ar-AMP (89 aa).

Positions 1–25 (MVNMKSVALIVIVMMAFMMVDPSMG) are cleaved as a signal peptide. The region spanning 26 to 68 (AGECVQGRCPSGMCCSQFGYCGRGPKYCGRASTTVDHQADAAA) is the Chitin-binding type-1 domain. 3 disulfides stabilise this stretch: cysteine 29/cysteine 40, cysteine 34/cysteine 46, and cysteine 39/cysteine 53. The propeptide at 56-89 (ASTTVDHQADAAAAAATKTANNPTDAKLAGAGSP) is removed in mature form.

Chitin-binding protein that inhibits the growth of the fungal pathogens B.cinerea, F.culmorum, H.sativum and A.consortiale, but not that of R.solani. Induces morphological changes in the fungal pathogens F.culmorum, H.sativum and R.solani, but not in A.consortiale and B.cinerea. Has antibacterial activity against the Gram-positive bacterium B.subtilis, but lacks antibacterial activity against the Gram-negative bacterium E.coli. The polypeptide is Antimicrobial peptide Ar-AMP (Amaranthus retroflexus (Redroot amaranth)).